The following is a 1190-amino-acid chain: Pumilio homolog 1 (1190 aa).

4 disordered regions span residues 38–74, 491–531, 611–675, and 744–777; these read LTSG…GVAG, SNSA…QQTD, ANGP…NSSL, and GPVG…LNLG. 4 stretches are compositionally biased toward low complexity: residues 491-508, 518-531, 628-675, and 765-777; these read SNSA…GQQQ, PLTP…QQTD, QQPQ…NSSL, and LSSH…LNLG. The region spanning 830–1172 is the PUM-HD domain; that stretch reads GRSRLLEDFR…HILAKLEKYY (343 aa). Pumilio repeat units lie at residues 850–885, 886–921, 922–959, 960–995, 996–1031, 1032–1067, 1068–1103, and 1107–1146; these read EIAG…LVFN, EILQ…ALAE, RIRG…EMVR, ELDG…FIID, AFKS…PILE, ELHQ…KIVA, EIRG…MLID, and TMND…IVMH. An adenine-nucleotide binding in RNA target region spans residues 865 to 869; it reads SRFIQ. A uracil-nucleotide binding in RNA target region spans residues 901–905; it reads NYVIQ. The interval 937–941 is adenine-nucleotide binding in RNA target; the sequence is CRVIQ. The non-specific-nucleotide binding in RNA target stretch occupies residues 975-979; sequence NHVVQ. An adenine-nucleotide binding in RNA target region spans residues 1011 to 1015; it reads CRVIQ. The interval 1047–1051 is uracil-nucleotide binding in RNA target; it reads NYVIQ. Positions 1083 to 1087 are guanine-nucleotide binding in RNA target; the sequence is SNVVE. Residues 1126–1130 form a uracil-nucleotide binding in RNA target region; sequence NYVVQ.

In terms of assembly, interacts with cpeb1-a; interacts with unphosphorylated cpeb1-a but not phosphorylated. Component of a complex with papd4, sympk, tacc3, parn, dazl and cpeb1. Phosphorylated. Phosphorylation takes place at the time of dissociation of cpeb1-a from pum1 and the translational activation of ccnb1 mRNA. Present in oocytes (at protein level).

The protein localises to the cytoplasm. It localises to the P-body. The protein resides in the cytoplasmic granule. Its function is as follows. Sequence-specific RNA-binding protein that acts as a post-transcriptional repressor by binding the 3'-UTR of mRNA targets. Binds to an RNA consensus sequence, the Pumilio Response Element (PRE), 5'-UGUANAUA-3', that is related to the Nanos Response Element (NRE). Mediates post-transcriptional repression of transcripts via different mechanisms: acts via direct recruitment of deadenylase complexes leading to translational inhibition and mRNA degradation. Also mediates deadenylation-independent repression by promoting accessibility of miRNAs. Acts as a post-transcriptional repressor of ccnb1 mRNA during oocyte maturation. In Xenopus laevis (African clawed frog), this protein is Pumilio homolog 1.